Here is a 315-residue protein sequence, read N- to C-terminus: Methionyl-tRNA formyltransferase (315 aa).

A (6S)-5,6,7,8-tetrahydrofolate-binding site is contributed by 114 to 117 (SLLP).

It belongs to the Fmt family.

It carries out the reaction L-methionyl-tRNA(fMet) + (6R)-10-formyltetrahydrofolate = N-formyl-L-methionyl-tRNA(fMet) + (6S)-5,6,7,8-tetrahydrofolate + H(+). Functionally, attaches a formyl group to the free amino group of methionyl-tRNA(fMet). The formyl group appears to play a dual role in the initiator identity of N-formylmethionyl-tRNA by promoting its recognition by IF2 and preventing the misappropriation of this tRNA by the elongation apparatus. This is Methionyl-tRNA formyltransferase from Corynebacterium efficiens (strain DSM 44549 / YS-314 / AJ 12310 / JCM 11189 / NBRC 100395).